Consider the following 465-residue polypeptide: Muscarinic acetylcholine receptor M2 (465 aa).

The Extracellular segment spans residues 1–21 (MNNSTNSSNNVALTSPYKTFE). N2, N3, and N6 each carry an N-linked (GlcNAc...) asparagine glycan. The chain crosses the membrane as a helical span at residues 22 to 44 (VVFIVLVAGSLSLVTIIGNILVM). Residues 45–58 (VSIKVNRHLQTVNN) are Cytoplasmic-facing. Residues 59–79 (YFLFSLACADLIIGVFSMNLY) traverse the membrane as a helical segment. Residues 80-96 (TLYTVIGYWPLGPVVCD) are Extracellular-facing. A disulfide bridge links C95 with C175. Residues 97–118 (LWLALDYVVSNASVMNLLIISF) form a helical membrane-spanning segment. The Important for signaling motif lies at 119–121 (DRY). Residues 119-138 (DRYFCVTKPLTYPVKRTTKM) lie on the Cytoplasmic side of the membrane. A helical membrane pass occupies residues 139–161 (AGMMIAAAWVLSFILWAPAILFW). At 162–183 (QFIVGVRTVEDGECYIQFFSNA) the chain is on the extracellular side. A helical membrane pass occupies residues 184–208 (AVTFGTAIAAFYLPVIIMTVLYWHI). Topologically, residues 209–386 (SRASKSRIKK…PPSREKKVTR (178 aa)) are cytoplasmic. A disordered region spans residues 217–319 (KKDKKEPVAN…SVGHSKDENS (103 aa)). The residue at position 231 (S231) is a Phosphoserine. The span at 253–269 (GLEHNKIQNGKTPRDAV) shows a compositional bias: basic and acidic residues. Composition is skewed to polar residues over residues 283 to 292 (NDSTSVSAVA) and 303 to 312 (DENTVSTSVG). A helical membrane pass occupies residues 387–409 (TILAILLAFIITWAPYNVMVLIN). Over 410–417 (TFCAPCIP) the chain is Extracellular. C412 and C415 are disulfide-bonded. The helical transmembrane segment at 418 to 441 (NTVWTIGYWLCYINSTINPACYAL) threads the bilayer. The Important for signaling signature appears at 435–439 (NPACY). The Cytoplasmic portion of the chain corresponds to 442–465 (CNATFKKTFKHLLMCHYKNIGATR). A phosphothreonine mark is found at T445, T449, and T464.

The protein belongs to the G-protein coupled receptor 1 family. Muscarinic acetylcholine receptor subfamily. CHRM2 sub-subfamily. As to quaternary structure, interacts with ARRB1 and ARRB2. Interacts with RACK1; the interaction regulates CHRM2 internalization. In terms of processing, phosphorylated in response to agonist treatment.

It is found in the cell membrane. It localises to the postsynaptic cell membrane. Its function is as follows. The muscarinic acetylcholine receptor mediates various cellular responses, including inhibition of adenylate cyclase, breakdown of phosphoinositides and modulation of potassium channels through the action of G proteins. Primary transducing effect is adenylate cyclase inhibition. Signaling promotes phospholipase C activity, leading to the release of inositol trisphosphate (IP3); this then triggers calcium ion release into the cytosol. This Bos taurus (Bovine) protein is Muscarinic acetylcholine receptor M2 (CHRM2).